A 638-amino-acid polypeptide reads, in one-letter code: NBPF family member NBPF6 (638 aa).

2 coiled-coil regions span residues 10–43 and 69–115; these read SERAEMNILEINQELRSQLAESNQQFRDLKEKFL and DSVL…KLRE. The tract at residues 157-285 is disordered; that stretch reads HLVHKLSPEN…VPPRHHDKSN (129 aa). Over residues 165–179 the composition is skewed to acidic residues; it reads ENDEDEDEDEDDKDE. In terms of domain architecture, Olduvai 1 spans 174 to 261; that stretch reads EDDKDEEVEK…EEEEALNIPP (88 aa). Residues 192 to 202 show a composition bias toward basic and acidic residues; it reads EVQKTEEKEVP. The segment covering 214 to 226 has biased composition (low complexity); that stretch reads SNSHNPSNSNQPH. Basic and acidic residues-rich tracts occupy residues 232 to 251 and 264 to 273; these read TFKEHEVDSALVVESEHPHD and QNDHEEEEGK. 2 Olduvai domains span residues 326-399 and 400-503; these read EKQS…ALVD and KIKK…SQAQ. The tract at residues 563-584 is disordered; the sequence is MKNPPQLEDDALEGSASNTQGR.

The protein belongs to the NBPF family.

The protein localises to the cytoplasm. The sequence is that of NBPF family member NBPF6 from Homo sapiens (Human).